Here is a 101-residue protein sequence, read N- to C-terminus: NAD(P)H-quinone oxidoreductase subunit 4L, chloroplastic (101 aa).

Transmembrane regions (helical) follow at residues 2-22 (MFEH…YGLI), 32-52 (MCLE…SDLF), and 61-81 (IFSI…LAIV).

The protein belongs to the complex I subunit 4L family. In terms of assembly, NDH is composed of at least 16 different subunits, 5 of which are encoded in the nucleus.

It localises to the plastid. The protein resides in the chloroplast thylakoid membrane. It carries out the reaction a plastoquinone + NADH + (n+1) H(+)(in) = a plastoquinol + NAD(+) + n H(+)(out). The enzyme catalyses a plastoquinone + NADPH + (n+1) H(+)(in) = a plastoquinol + NADP(+) + n H(+)(out). In terms of biological role, NDH shuttles electrons from NAD(P)H:plastoquinone, via FMN and iron-sulfur (Fe-S) centers, to quinones in the photosynthetic chain and possibly in a chloroplast respiratory chain. The immediate electron acceptor for the enzyme in this species is believed to be plastoquinone. Couples the redox reaction to proton translocation, and thus conserves the redox energy in a proton gradient. The protein is NAD(P)H-quinone oxidoreductase subunit 4L, chloroplastic of Lemna minor (Common duckweed).